A 281-amino-acid chain; its full sequence is MKYIGAHVSASGGVENAVLRSVEIGANAFALFTKNQRQWQAPPLKEDTIEKFKRFCQVHHFSPAQILPHDSYLINLGNPEAENLAKSREAFIDEMRRCDQLGLTLLNFHPGSHLNKISEQDCLARIAESINIAVDSVPNVVAVIENTAGQGSNLGWRFEHLAEIIEQVENKQRVGVCLDTCHLFSAGYDISSLASCEQTFADFDKVVGFEFLRGMHLNGSKTLLASRVDRHHTLREGTIGTDVFKFIMNNAHFDNIPLILETIEPEIWAEEINFLRSLEQN.

His69, His109, Glu145, Asp179, His182, His216, Asp229, His231, and Glu261 together coordinate Zn(2+).

Belongs to the AP endonuclease 2 family. Zn(2+) serves as cofactor.

The catalysed reaction is Endonucleolytic cleavage to 5'-phosphooligonucleotide end-products.. In terms of biological role, endonuclease IV plays a role in DNA repair. It cleaves phosphodiester bonds at apurinic or apyrimidinic (AP) sites, generating a 3'-hydroxyl group and a 5'-terminal sugar phosphate. This chain is Probable endonuclease 4, found in Glaesserella parasuis serovar 5 (strain SH0165) (Haemophilus parasuis).